Here is a 656-residue protein sequence, read N- to C-terminus: Solute carrier family 5 member 4A (656 aa).

At 1–28 (MASTASVSTSTASSELSSLSNNINNAAD) the chain is on the cytoplasmic side. The helical transmembrane segment at 29–47 (ISVIVIYFVVVMAVGVWAM) threads the bilayer. The Extracellular segment spans residues 48–64 (LKTNRSTVGGFFLAGRS). Residues 65–85 (MTWWPMGASLFASNIGSGHFV) form a helical membrane-spanning segment. Residues 86-105 (GLAGTGAASGIAVTAFESHS) are Cytoplasmic-facing. A helical transmembrane segment spans residues 106-126 (FALLLVLGWIFVPIYIKAGVM). At 127-171 (TMPEYLKKRFGGKRLQIYLSILFLFICVILTISADIFSGAIFIKL) the chain is on the extracellular side. Residues 172–191 (ALGLNLYLAILILLAITAIF) form a helical membrane-spanning segment. Residues 192–208 (TITGGLASVIYTDTVQA) are Cytoplasmic-facing. A helical membrane pass occupies residues 209–229 (VIMLVGSFILMVFAFVEVGGY). At 230 to 270 (ESFTEKFMNAIPSVVEGDNLTINSRCYTPQPDSFHIFRDPV) the chain is on the extracellular side. Asn248 carries an N-linked (GlcNAc...) asparagine glycan. The helical transmembrane segment at 271–291 (TGDIPWPGTAFGMPITALWYW) threads the bilayer. Residues 292 to 314 (CINQVIVQRCLCGKNLSHVKAAC) lie on the Cytoplasmic side of the membrane. The chain crosses the membrane as a helical span at residues 315–334 (ILCGYLKLLPLFFMVMPGMI). Residues 335 to 423 (SRILYTDMVA…RKKASERELL (89 aa)) are Extracellular-facing. Residues 424-443 (IAGRLFVSVLIVTSILWVPI) traverse the membrane as a helical segment. The Cytoplasmic segment spans residues 444-455 (VEVSQGGQLVHY). Residues 456–476 (TEAISSYLGPPIAAVFLVAVF) traverse the membrane as a helical segment. At 477-526 (CKRANEQGAFWGLMVGLVMGLIRMIAEFSYGTGSCLAPSSCPKIICGVHY) the chain is on the extracellular side. The chain crosses the membrane as a helical span at residues 527-547 (LYFAIILFFVCILVILGVSYL). Over 548 to 634 (TKPIPDVHLH…TDTTEKPFWR (87 aa)) the chain is Cytoplasmic. A disordered region spans residues 574-593 (DAEDKEENGADDRTEEDQTE). The helical transmembrane segment at 635-655 (TVMNVNVILLLAVAAFFYGYF) threads the bilayer.

It belongs to the sodium:solute symporter (SSF) (TC 2.A.21) family. Expressed in small intestine. Expressed in kidney.

The protein resides in the cell membrane. Not inhibited by phlorizin. Does not function as sodium/D-glucose symporter. Generates D-glucose-induced depolarization in a pH-dependent manner, with activity in acidic conditions (pH 5) but not neutral conditions. The protein is Solute carrier family 5 member 4A of Mus musculus (Mouse).